The chain runs to 181 residues: Inorganic pyrophosphatase 2 (181 aa).

Residues K30, R44, and Y56 each coordinate substrate. 3 residues coordinate Mg(2+): D66, D71, and D103. Position 142 (Y142) interacts with substrate.

The protein belongs to the PPase family. In terms of assembly, homohexamer. It depends on Mg(2+) as a cofactor.

The protein resides in the cytoplasm. The catalysed reaction is diphosphate + H2O = 2 phosphate + H(+). Its function is as follows. Catalyzes the hydrolysis of inorganic pyrophosphate (PPi) forming two phosphate ions. The polypeptide is Inorganic pyrophosphatase 2 (Pseudomonas syringae pv. tomato (strain ATCC BAA-871 / DC3000)).